A 459-amino-acid chain; its full sequence is Putrescine aminotransferase (459 aa).

Pyridoxal 5'-phosphate-binding positions include 150–151 (GT) and Gln-274. Residue Lys-300 is modified to N6-(pyridoxal phosphate)lysine. Thr-332 provides a ligand contact to pyridoxal 5'-phosphate.

It belongs to the class-III pyridoxal-phosphate-dependent aminotransferase family. Putrescine aminotransferase subfamily. Requires pyridoxal 5'-phosphate as cofactor.

It carries out the reaction an alkane-alpha,omega-diamine + 2-oxoglutarate = an omega-aminoaldehyde + L-glutamate. The enzyme catalyses putrescine + 2-oxoglutarate = 1-pyrroline + L-glutamate + H2O. It catalyses the reaction cadaverine + 2-oxoglutarate = 5-aminopentanal + L-glutamate. The protein operates within amine and polyamine degradation; putrescine degradation; 4-aminobutanal from putrescine (transaminase route): step 1/1. Functionally, catalyzes the aminotransferase reaction from putrescine to 2-oxoglutarate, leading to glutamate and 4-aminobutanal, which spontaneously cyclizes to form 1-pyrroline. This is the first step in one of two pathways for putrescine degradation, where putrescine is converted into 4-aminobutanoate (gamma-aminobutyrate or GABA) via 4-aminobutanal. Also functions as a cadaverine transaminase in a a L-lysine degradation pathway to succinate that proceeds via cadaverine, glutarate and L-2-hydroxyglutarate. The chain is Putrescine aminotransferase from Salmonella agona (strain SL483).